The primary structure comprises 130 residues: Holo-[acyl-carrier-protein] synthase (130 aa).

2 residues coordinate Mg(2+): aspartate 9 and glutamate 58.

The protein belongs to the P-Pant transferase superfamily. AcpS family. Mg(2+) is required as a cofactor.

It localises to the cytoplasm. The catalysed reaction is apo-[ACP] + CoA = holo-[ACP] + adenosine 3',5'-bisphosphate + H(+). Transfers the 4'-phosphopantetheine moiety from coenzyme A to a Ser of acyl-carrier-protein. The chain is Holo-[acyl-carrier-protein] synthase from Mycobacterium marinum (strain ATCC BAA-535 / M).